The sequence spans 499 residues: Glycerol kinase (499 aa).

Thr14 contributes to the ADP binding site. Thr14, Thr15, and Ser16 together coordinate ATP. Thr14 contacts sn-glycerol 3-phosphate. Arg18 lines the ADP pocket. Sn-glycerol 3-phosphate contacts are provided by Arg84, Glu85, Tyr136, and Asp245. 5 residues coordinate glycerol: Arg84, Glu85, Tyr136, Asp245, and Gln246. Positions 267 and 310 each coordinate ADP. Residues Thr267, Gly310, Gln314, and Gly411 each coordinate ATP. The ADP site is built by Gly411 and Asn415.

This sequence belongs to the FGGY kinase family.

The enzyme catalyses glycerol + ATP = sn-glycerol 3-phosphate + ADP + H(+). The protein operates within polyol metabolism; glycerol degradation via glycerol kinase pathway; sn-glycerol 3-phosphate from glycerol: step 1/1. With respect to regulation, inhibited by fructose 1,6-bisphosphate (FBP). Functionally, key enzyme in the regulation of glycerol uptake and metabolism. Catalyzes the phosphorylation of glycerol to yield sn-glycerol 3-phosphate. This Nitrosomonas eutropha (strain DSM 101675 / C91 / Nm57) protein is Glycerol kinase.